A 353-amino-acid polypeptide reads, in one-letter code: Photosystem II protein D1 (353 aa).

Thr-2 is modified (N-acetylthreonine). Thr-2 carries the post-translational modification Phosphothreonine. A run of 3 helical transmembrane segments spans residues 29-46 (YIGW…TATS), 118-133 (HFLL…EWEL), and 142-156 (WIAV…AATA). His-118 contributes to the chlorophyll a binding site. A pheophytin a-binding site is contributed by Tyr-126. [CaMn4O5] cluster is bound by residues Asp-170 and Glu-189. Residues 197–218 (FHMLGVAGVFGGSLFSAMHGSL) traverse the membrane as a helical segment. His-198 contributes to the chlorophyll a binding site. Residues His-215 and 264–265 (SF) contribute to the a quinone site. His-215 contributes to the Fe cation binding site. His-272 is a Fe cation binding site. Residues 274 to 288 (FLAAWPVVGIWFTAL) form a helical membrane-spanning segment. His-332, Glu-333, Asp-342, and Ala-344 together coordinate [CaMn4O5] cluster. The propeptide occupies 345–353 (AVEAPSTIG).

This sequence belongs to the reaction center PufL/M/PsbA/D family. In terms of assembly, PSII is composed of 1 copy each of membrane proteins PsbA, PsbB, PsbC, PsbD, PsbE, PsbF, PsbH, PsbI, PsbJ, PsbK, PsbL, PsbM, PsbT, PsbX, PsbY, PsbZ, Psb30/Ycf12, at least 3 peripheral proteins of the oxygen-evolving complex and a large number of cofactors. It forms dimeric complexes. Requires The D1/D2 heterodimer binds P680, chlorophylls that are the primary electron donor of PSII, and subsequent electron acceptors. It shares a non-heme iron and each subunit binds pheophytin, quinone, additional chlorophylls, carotenoids and lipids. D1 provides most of the ligands for the Mn4-Ca-O5 cluster of the oxygen-evolving complex (OEC). There is also a Cl(-1) ion associated with D1 and D2, which is required for oxygen evolution. The PSII complex binds additional chlorophylls, carotenoids and specific lipids. as cofactor. Tyr-161 forms a radical intermediate that is referred to as redox-active TyrZ, YZ or Y-Z. In terms of processing, C-terminally processed by CTPA; processing is essential to allow assembly of the oxygen-evolving complex and thus photosynthetic growth.

Its subcellular location is the plastid. The protein resides in the chloroplast thylakoid membrane. The enzyme catalyses 2 a plastoquinone + 4 hnu + 2 H2O = 2 a plastoquinol + O2. Photosystem II (PSII) is a light-driven water:plastoquinone oxidoreductase that uses light energy to abstract electrons from H(2)O, generating O(2) and a proton gradient subsequently used for ATP formation. It consists of a core antenna complex that captures photons, and an electron transfer chain that converts photonic excitation into a charge separation. The D1/D2 (PsbA/PsbD) reaction center heterodimer binds P680, the primary electron donor of PSII as well as several subsequent electron acceptors. The chain is Photosystem II protein D1 from Lemna minor (Common duckweed).